The chain runs to 182 residues: Ribosome-recycling factor (182 aa).

The protein belongs to the RRF family.

It is found in the cytoplasm. In terms of biological role, responsible for the release of ribosomes from messenger RNA at the termination of protein biosynthesis. May increase the efficiency of translation by recycling ribosomes from one round of translation to another. The protein is Ribosome-recycling factor of Hydrogenobaculum sp. (strain Y04AAS1).